Here is a 101-residue protein sequence, read N- to C-terminus: MNLERVSNEEKLNLCRKYYLGGFAFLPFLWLVNIFWFFREAFLVPAYTEQSQIKGYVWRSAVGFLFWVIVLTSWITIFQIYRPRWGALGDYLSFTIPLGTP.

Over 1 to 17 (MNLERVSNEEKLNLCRK) the chain is Cytoplasmic. The helical intramembrane region spans 18-36 (YYLGGFAFLPFLWLVNIFW). The Cytoplasmic segment spans residues 37 to 57 (FFREAFLVPAYTEQSQIKGYV). Residues 58 to 78 (WRSAVGFLFWVIVLTSWITIF) form a helical membrane-spanning segment. The Lumenal segment spans residues 79–101 (QIYRPRWGALGDYLSFTIPLGTP).

It belongs to the PEN-2 family. The functional gamma-secretase complex is composed of at least four polypeptides: a presenilin homodimer (PSEN1 or PSEN2), nicastrin (NCSTN), APH1 (APH1A or APH1B) and PSENEN. In terms of tissue distribution, widely expressed. Expressed in leukocytes, lung, placenta, small intestine, liver, kidney, spleen thymus, skeletal muscle, heart and brain.

The protein resides in the endoplasmic reticulum membrane. It is found in the golgi apparatus. Its subcellular location is the golgi stack membrane. It localises to the cell membrane. The protein localises to the membrane. Functionally, essential subunit of the gamma-secretase complex, an endoprotease complex that catalyzes the intramembrane cleavage of integral membrane proteins such as Notch receptors and APP (amyloid-beta precursor protein). The gamma-secretase complex plays a role in Notch and Wnt signaling cascades and regulation of downstream processes via its role in processing key regulatory proteins, and by regulating cytosolic CTNNB1 levels. PSENEN modulates both endoproteolysis of presenilin and gamma-secretase activity. The chain is Gamma-secretase subunit PEN-2 (PSENEN) from Homo sapiens (Human).